Reading from the N-terminus, the 551-residue chain is Dihydroxy-acid dehydratase (551 aa).

Cys-52 is a [2Fe-2S] cluster binding site. Asp-84 contributes to the Mg(2+) binding site. Cys-125 contacts [2Fe-2S] cluster. Mg(2+) is bound by residues Asp-126 and Lys-127. Lys-127 is modified (N6-carboxylysine). Residue Cys-197 coordinates [2Fe-2S] cluster. Glu-448 contributes to the Mg(2+) binding site. Ser-474 serves as the catalytic Proton acceptor.

The protein belongs to the IlvD/Edd family. As to quaternary structure, homodimer. The cofactor is [2Fe-2S] cluster. Mg(2+) serves as cofactor.

It catalyses the reaction (2R)-2,3-dihydroxy-3-methylbutanoate = 3-methyl-2-oxobutanoate + H2O. The enzyme catalyses (2R,3R)-2,3-dihydroxy-3-methylpentanoate = (S)-3-methyl-2-oxopentanoate + H2O. It functions in the pathway amino-acid biosynthesis; L-isoleucine biosynthesis; L-isoleucine from 2-oxobutanoate: step 3/4. The protein operates within amino-acid biosynthesis; L-valine biosynthesis; L-valine from pyruvate: step 3/4. Functions in the biosynthesis of branched-chain amino acids. Catalyzes the dehydration of (2R,3R)-2,3-dihydroxy-3-methylpentanoate (2,3-dihydroxy-3-methylvalerate) into 2-oxo-3-methylpentanoate (2-oxo-3-methylvalerate) and of (2R)-2,3-dihydroxy-3-methylbutanoate (2,3-dihydroxyisovalerate) into 2-oxo-3-methylbutanoate (2-oxoisovalerate), the penultimate precursor to L-isoleucine and L-valine, respectively. The protein is Dihydroxy-acid dehydratase of Francisella tularensis subsp. tularensis (strain FSC 198).